Reading from the N-terminus, the 451-residue chain is UDP-N-acetylmuramoylalanine--D-glutamate ligase (451 aa).

Position 119 to 125 (119 to 125 (GSNGKTT)) interacts with ATP.

It belongs to the MurCDEF family.

Its subcellular location is the cytoplasm. The catalysed reaction is UDP-N-acetyl-alpha-D-muramoyl-L-alanine + D-glutamate + ATP = UDP-N-acetyl-alpha-D-muramoyl-L-alanyl-D-glutamate + ADP + phosphate + H(+). Its pathway is cell wall biogenesis; peptidoglycan biosynthesis. Cell wall formation. Catalyzes the addition of glutamate to the nucleotide precursor UDP-N-acetylmuramoyl-L-alanine (UMA). In Streptococcus agalactiae serotype III (strain NEM316), this protein is UDP-N-acetylmuramoylalanine--D-glutamate ligase.